Consider the following 424-residue polypeptide: UDP-N-acetylglucosamine 1-carboxyvinyltransferase (424 aa).

A phosphoenolpyruvate-binding site is contributed by 22-23 (KN). Residue Arg-95 coordinates UDP-N-acetyl-alpha-D-glucosamine. Cys-119 acts as the Proton donor in catalysis. At Cys-119 the chain carries 2-(S-cysteinyl)pyruvic acid O-phosphothioketal. Residues 124–128 (RPVDQ), Asp-311, and Ile-333 contribute to the UDP-N-acetyl-alpha-D-glucosamine site.

Belongs to the EPSP synthase family. MurA subfamily.

The protein resides in the cytoplasm. It catalyses the reaction phosphoenolpyruvate + UDP-N-acetyl-alpha-D-glucosamine = UDP-N-acetyl-3-O-(1-carboxyvinyl)-alpha-D-glucosamine + phosphate. It functions in the pathway cell wall biogenesis; peptidoglycan biosynthesis. Functionally, cell wall formation. Adds enolpyruvyl to UDP-N-acetylglucosamine. In Polaromonas sp. (strain JS666 / ATCC BAA-500), this protein is UDP-N-acetylglucosamine 1-carboxyvinyltransferase.